A 102-amino-acid chain; its full sequence is Neuropeptide F (102 aa).

The first 29 residues, 1–29 (MSNTMRCILIVCVALTLIAAGCNVEASNS), serve as a signal peptide directing secretion. Positions 30–32 (RPP) are excised as a propeptide. Phenylalanine amide is present on Phe62. Positions 66–102 (GGPLMEMLRNRELENNMAKSINSGGELIRALDEEEVF) are excised as a propeptide.

Belongs to the NPY family.

The protein resides in the secreted. An integral part of the sensory system that mediates food signaling, providing the neural basis for the regulation of food response; coordinates larval foraging and social behavior changes during development. May have a hormonal role in females. The protein is Neuropeptide F of Drosophila pseudoobscura pseudoobscura (Fruit fly).